The sequence spans 319 residues: Histidinol-phosphate aminotransferase 1 (319 aa).

Lys-182 carries the post-translational modification N6-(pyridoxal phosphate)lysine.

It belongs to the class-II pyridoxal-phosphate-dependent aminotransferase family. Histidinol-phosphate aminotransferase subfamily. Requires pyridoxal 5'-phosphate as cofactor.

It catalyses the reaction L-histidinol phosphate + 2-oxoglutarate = 3-(imidazol-4-yl)-2-oxopropyl phosphate + L-glutamate. Its pathway is amino-acid biosynthesis; L-histidine biosynthesis; L-histidine from 5-phospho-alpha-D-ribose 1-diphosphate: step 7/9. This chain is Histidinol-phosphate aminotransferase 1 (hisC1), found in Archaeoglobus fulgidus (strain ATCC 49558 / DSM 4304 / JCM 9628 / NBRC 100126 / VC-16).